Here is a 22-residue protein sequence, read N- to C-terminus: Zinc finger protein 326 (22 aa).

The disordered stretch occupies residues 1–22 (QGYGFNEPEQTRNQGGSSWEAP). Polar residues predominate over residues 11–22 (TRNQGGSSWEAP).

It belongs to the AKAP95 family.

The protein localises to the nucleus matrix. Its function is as follows. Probable transcriptional activator which may play a role in neuronal differentiation. Able to bind DNA and activate expression in vitro. This Rattus norvegicus (Rat) protein is Zinc finger protein 326 (Znf326).